We begin with the raw amino-acid sequence, 541 residues long: Alpha-zingiberene synthase (541 aa).

Positions 296, 300, 437, 441, and 445 each coordinate Mg(2+). Residues 296 to 300 carry the DDXXD motif motif; sequence DDIYD.

This sequence belongs to the terpene synthase family. The cofactor is Mg(2+). It depends on Mn(2+) as a cofactor.

It carries out the reaction (2E,6E)-farnesyl diphosphate = alpha-zingiberene + diphosphate. It functions in the pathway secondary metabolite biosynthesis; terpenoid biosynthesis. In terms of biological role, sesquiterpene synthase that catalyzes the formation of alpha-zingiberene and other sesquiterpenes from trans,trans-farnesyl diphosphate (FPP). May have an additional monoterpene synthase activity. The polypeptide is Alpha-zingiberene synthase (ZIS) (Ocimum basilicum (Sweet basil)).